Reading from the N-terminus, the 312-residue chain is Regulation of nuclear pre-mRNA domain-containing protein 1A (312 aa).

The residue at position 2 (Ser2) is an N-acetylserine. Residues 2–133 form the CID domain; it reads SAFSEAALEK…QLKHALYGDK (132 aa). Ser153, Ser156, and Ser285 each carry phosphoserine. A coiled-coil region spans residues 244–286; that stretch reads LADFLRCQKEALAEKEHKLEEYKRKLARVSLVRKELRARIQSL.

It belongs to the UPF0400 (RTT103) family. In terms of assembly, may form a heterodimer with RPRD1B. Associates with the RNA polymerase II subunit POLR2A (via CTD phosphorylated at 'Ser-2' and 'Ser-7' of the heptad repeats).

It is found in the nucleus. Functionally, interacts with phosphorylated C-terminal heptapeptide repeat domain (CTD) of the largest RNA polymerase II subunit POLR2A, and participates in dephosphorylation of the CTD by RPAP2. May act as a negative regulator of cyclin-D1 (CCND1) and cyclin-E (CCNE1) in the cell cycle. The protein is Regulation of nuclear pre-mRNA domain-containing protein 1A (Rprd1a) of Mus musculus (Mouse).